The sequence spans 1062 residues: Valine--tRNA ligase, mitochondrial (1062 aa).

The N-terminal 15 residues, 1–15, are a transit peptide targeting the mitochondrion; the sequence is MPHLPLASFRPPLRG. The interval 1 to 73 is disordered; it reads MPHLPLASFR…AKGKPPAEST (73 aa). A compositionally biased stretch (basic and acidic residues) spans 42-56; that stretch reads RNREAKQKRLREKQA. The short motif at 146 to 156 is the 'HIGH' region element; sequence PNVTGSLHIGH. Positions 659 to 663 match the 'KMSKS' region motif; that stretch reads KMSKS. Position 662 (K662) interacts with ATP.

The protein belongs to the class-I aminoacyl-tRNA synthetase family.

Its subcellular location is the mitochondrion. The enzyme catalyses tRNA(Val) + L-valine + ATP = L-valyl-tRNA(Val) + AMP + diphosphate. Its function is as follows. Catalyzes the attachment of valine to tRNA(Val) in a two-step reaction: valine is first activated by ATP to form Val-AMP and then transferred to the acceptor end of tRNA(Val). The polypeptide is Valine--tRNA ligase, mitochondrial (VARS2) (Sus scrofa (Pig)).